The chain runs to 499 residues: Aspartyl/glutamyl-tRNA(Asn/Gln) amidotransferase subunit B (499 aa).

The protein belongs to the GatB/GatE family. GatB subfamily. In terms of assembly, heterotrimer of A, B and C subunits.

It catalyses the reaction L-glutamyl-tRNA(Gln) + L-glutamine + ATP + H2O = L-glutaminyl-tRNA(Gln) + L-glutamate + ADP + phosphate + H(+). The catalysed reaction is L-aspartyl-tRNA(Asn) + L-glutamine + ATP + H2O = L-asparaginyl-tRNA(Asn) + L-glutamate + ADP + phosphate + 2 H(+). Functionally, allows the formation of correctly charged Asn-tRNA(Asn) or Gln-tRNA(Gln) through the transamidation of misacylated Asp-tRNA(Asn) or Glu-tRNA(Gln) in organisms which lack either or both of asparaginyl-tRNA or glutaminyl-tRNA synthetases. The reaction takes place in the presence of glutamine and ATP through an activated phospho-Asp-tRNA(Asn) or phospho-Glu-tRNA(Gln). In Salinispora tropica (strain ATCC BAA-916 / DSM 44818 / JCM 13857 / NBRC 105044 / CNB-440), this protein is Aspartyl/glutamyl-tRNA(Asn/Gln) amidotransferase subunit B.